We begin with the raw amino-acid sequence, 485 residues long: D-alanine--D-alanyl carrier protein ligase (485 aa).

An ATP-binding site is contributed by 144–145 (TS). D-alanine is bound at residue D189. ATP is bound at residue 284–289 (NTYGPT). V293 contacts D-alanine. 2 residues coordinate ATP: D365 and K473. K473 serves as a coordination point for D-alanine.

The protein belongs to the ATP-dependent AMP-binding enzyme family. DltA subfamily.

The protein localises to the cytoplasm. It catalyses the reaction holo-[D-alanyl-carrier protein] + D-alanine + ATP = D-alanyl-[D-alanyl-carrier protein] + AMP + diphosphate. Its pathway is cell wall biogenesis; lipoteichoic acid biosynthesis. Catalyzes the first step in the D-alanylation of lipoteichoic acid (LTA), the activation of D-alanine and its transfer onto the D-alanyl carrier protein (Dcp) DltC. In an ATP-dependent two-step reaction, forms a high energy D-alanyl-AMP intermediate, followed by transfer of the D-alanyl residue as a thiol ester to the phosphopantheinyl prosthetic group of the Dcp. D-alanylation of LTA plays an important role in modulating the properties of the cell wall in Gram-positive bacteria, influencing the net charge of the cell wall. In Staphylococcus aureus (strain Mu3 / ATCC 700698), this protein is D-alanine--D-alanyl carrier protein ligase.